The sequence spans 700 residues: Small ribosomal subunit protein uS3c (700 aa).

Insert stretches follow at residues 88–196 and 282–587; these read NCHM…LGKF and KPCT…FQTR.

Belongs to the universal ribosomal protein uS3 family. In terms of assembly, part of the 30S ribosomal subunit.

The protein resides in the plastid. It localises to the chloroplast. This is Small ribosomal subunit protein uS3c (rps3) from Tetradesmus obliquus (Green alga).